The following is a 378-amino-acid chain: Rhodopsin (378 aa).

At 1 to 53 (MMSIASGPSHAAYTWASQGGGFGNQTVVDKVPPEMLHMVDAHWYQFPPMNPLW) the chain is on the extracellular side. Asn24 carries an N-linked (GlcNAc...) asparagine glycan. The chain crosses the membrane as a helical span at residues 54-78 (HALLGFVIGVLGVISVIGNGMVIYI). Residues 79 to 90 (FTTTKSLRTPSN) lie on the Cytoplasmic side of the membrane. A helical membrane pass occupies residues 91–115 (LLVVNLAISDFLMMLCMSPAMVINC). Topologically, residues 116-130 (YYETWVLGPLFCELY) are extracellular. A disulfide bond links Cys127 and Cys204. Residues 131–150 (GLAGSLFGCASIWTMTMIAF) traverse the membrane as a helical segment. Residues 151 to 169 (DRYNVIVKGLSAKPMTING) are Cytoplasmic-facing. The helical transmembrane segment at 170-193 (ALIRILTIWFFTLAWTIAPMFGWN) threads the bilayer. Over 194–217 (RYVPEGNMTACGTDYLTKDLFSRS) the chain is Extracellular. Residue Asn200 is glycosylated (N-linked (GlcNAc...) asparagine). Residues 218-245 (YILIYSIFVYFTPLFLIIYSYFFIIQAV) traverse the membrane as a helical segment. At 246–280 (AAHEKNMREQAKKMNVASLRSAENQSTSAECKLAK) the chain is on the cytoplasmic side. The helical transmembrane segment at 281–304 (VALMTISLWFMAWTPYLVINYSGI) threads the bilayer. Residues 305-311 (FETTKIS) lie on the Extracellular side of the membrane. The helical transmembrane segment at 312–336 (PLFTIWGSLFAKANAVYNPIVYGIS) threads the bilayer. Lys323 carries the post-translational modification N6-(retinylidene)lysine. Residues 337–378 (HPKYRAALFQKFPSLACTTEPTGADTMSTTTTVTEGNEKPAA) lie on the Cytoplasmic side of the membrane.

This sequence belongs to the G-protein coupled receptor 1 family. Opsin subfamily. In terms of processing, phosphorylated on some or all of the serine and threonine residues present in the C-terminal region.

The protein localises to the membrane. Visual pigments are the light-absorbing molecules that mediate vision. They consist of an apoprotein, opsin, covalently linked to cis-retinal. In Camponotus atriceps (Florida carpenter ant), this protein is Rhodopsin.